Here is a 616-residue protein sequence, read N- to C-terminus: Probable beta-hexosaminidase ARB_01353 (616 aa).

Residues 1–20 form the signal peptide; it reads MRFAKALAITAVLLSGVVEA. Positions 96–117 are disordered; sequence KFDPFPDQSSKPKEKRQNAPPG. An N-linked (GlcNAc...) asparagine glycan is attached at asparagine 333. Glutamate 361 (proton donor) is an active-site residue.

It belongs to the glycosyl hydrolase 20 family.

The protein resides in the secreted. It catalyses the reaction Hydrolysis of terminal non-reducing N-acetyl-D-hexosamine residues in N-acetyl-beta-D-hexosaminides.. Beta-hexosaminidase that shows a broad substrate specificity. The sequence is that of Probable beta-hexosaminidase ARB_01353 from Arthroderma benhamiae (strain ATCC MYA-4681 / CBS 112371) (Trichophyton mentagrophytes).